The chain runs to 241 residues: Small ribosomal subunit protein uS3 (241 aa).

The 70-residue stretch at 22–91 folds into the KH type-2 domain; it reads VDEYLAYKFH…NPQVTVVKVE (70 aa). Positions 218 to 241 are disordered; the sequence is EMQQTQPEAPTLEETVEQSGGETQ.

It belongs to the universal ribosomal protein uS3 family. As to quaternary structure, part of the 30S ribosomal subunit.

Binds the lower part of the 30S subunit head. This is Small ribosomal subunit protein uS3 from Ignicoccus hospitalis (strain KIN4/I / DSM 18386 / JCM 14125).